The primary structure comprises 342 residues: GTPase Obg (342 aa).

The 159-residue stretch at 1 to 159 (MKFLDLCKVY…RTIWLRLKLI (159 aa)) folds into the Obg domain. Residues 160 to 327 (ADAGLLGLPN…VLRALWAEID (168 aa)) enclose the OBG-type G domain. Residues 166–173 (GLPNAGKS), 191–195 (FTTLV), 212–215 (DIPG), 279–282 (NKID), and 308–310 (SGV) contribute to the GTP site. Residues serine 173 and threonine 193 each coordinate Mg(2+).

The protein belongs to the TRAFAC class OBG-HflX-like GTPase superfamily. OBG GTPase family. As to quaternary structure, monomer. Mg(2+) is required as a cofactor.

Its subcellular location is the cytoplasm. An essential GTPase which binds GTP, GDP and possibly (p)ppGpp with moderate affinity, with high nucleotide exchange rates and a fairly low GTP hydrolysis rate. Plays a role in control of the cell cycle, stress response, ribosome biogenesis and in those bacteria that undergo differentiation, in morphogenesis control. This chain is GTPase Obg, found in Cereibacter sphaeroides (strain ATCC 17025 / ATH 2.4.3) (Rhodobacter sphaeroides).